A 520-amino-acid polypeptide reads, in one-letter code: L-cysteine:1D-myo-inositol 2-amino-2-deoxy-alpha-D-glucopyranoside ligase (520 aa).

Residue Cys-48 coordinates Zn(2+). L-cysteinyl-5'-AMP is bound by residues 48–51 (CGIT), Thr-63, and 86–88 (NVT). Residues 50–60 (ITPYDSTHLGH) carry the 'HIGH' region motif. The short motif at 192-197 (ERGGDP) is the 'ERGGDP' region element. Trp-232 is a binding site for L-cysteinyl-5'-AMP. Residue Cys-236 participates in Zn(2+) binding. 254–256 (GED) contributes to the L-cysteinyl-5'-AMP binding site. Residue His-261 participates in Zn(2+) binding. Ile-288 provides a ligand contact to L-cysteinyl-5'-AMP. The 'KMSKS' region motif lies at 294–298 (KMSKS).

It belongs to the class-I aminoacyl-tRNA synthetase family. MshC subfamily. As to quaternary structure, monomer. It depends on Zn(2+) as a cofactor.

It carries out the reaction 1D-myo-inositol 2-amino-2-deoxy-alpha-D-glucopyranoside + L-cysteine + ATP = 1D-myo-inositol 2-(L-cysteinylamino)-2-deoxy-alpha-D-glucopyranoside + AMP + diphosphate + H(+). Catalyzes the ATP-dependent condensation of GlcN-Ins and L-cysteine to form L-Cys-GlcN-Ins. This is L-cysteine:1D-myo-inositol 2-amino-2-deoxy-alpha-D-glucopyranoside ligase from Corynebacterium kroppenstedtii (strain DSM 44385 / JCM 11950 / CIP 105744 / CCUG 35717).